The sequence spans 370 residues: Lipoyl synthase 1, chloroplastic (370 aa).

Disordered stretches follow at residues 1-25 (MMQS…PVCR) and 39-67 (EAAP…KKPA). The N-terminal 37 residues, 1-37 (MMQSSLARPLPRPPIRPACGNPVCRSRPGSVSVARCR), are a transit peptide targeting the chloroplast. [4Fe-4S] cluster-binding residues include cysteine 95, cysteine 100, cysteine 106, cysteine 132, cysteine 136, cysteine 139, and serine 347. The Radical SAM core domain maps to 115 to 336 (GEGDGIATAT…KEYGESVGFR (222 aa)).

The protein belongs to the radical SAM superfamily. Lipoyl synthase family. [4Fe-4S] cluster is required as a cofactor.

It is found in the plastid. The protein localises to the chloroplast. It catalyses the reaction [[Fe-S] cluster scaffold protein carrying a second [4Fe-4S](2+) cluster] + N(6)-octanoyl-L-lysyl-[protein] + 2 oxidized [2Fe-2S]-[ferredoxin] + 2 S-adenosyl-L-methionine + 4 H(+) = [[Fe-S] cluster scaffold protein] + N(6)-[(R)-dihydrolipoyl]-L-lysyl-[protein] + 4 Fe(3+) + 2 hydrogen sulfide + 2 5'-deoxyadenosine + 2 L-methionine + 2 reduced [2Fe-2S]-[ferredoxin]. Its pathway is protein modification; protein lipoylation via endogenous pathway; protein N(6)-(lipoyl)lysine from octanoyl-[acyl-carrier-protein]: step 2/2. In terms of biological role, catalyzes the radical-mediated insertion of two sulfur atoms into the C-6 and C-8 positions of the octanoyl moiety bound to the lipoyl domains of lipoate-dependent enzymes, thereby converting the octanoylated domains into lipoylated derivatives. This Oryza sativa subsp. indica (Rice) protein is Lipoyl synthase 1, chloroplastic.